We begin with the raw amino-acid sequence, 722 residues long: Ribosomal RNA large subunit methyltransferase K/L (722 aa).

Residues 43 to 154 enclose the THUMP domain; that stretch reads IGLRACLWSR…GNEGRVGIDL (112 aa).

Belongs to the methyltransferase superfamily. RlmKL family.

Its subcellular location is the cytoplasm. It catalyses the reaction guanosine(2445) in 23S rRNA + S-adenosyl-L-methionine = N(2)-methylguanosine(2445) in 23S rRNA + S-adenosyl-L-homocysteine + H(+). The enzyme catalyses guanosine(2069) in 23S rRNA + S-adenosyl-L-methionine = N(2)-methylguanosine(2069) in 23S rRNA + S-adenosyl-L-homocysteine + H(+). Specifically methylates the guanine in position 2445 (m2G2445) and the guanine in position 2069 (m7G2069) of 23S rRNA. This is Ribosomal RNA large subunit methyltransferase K/L from Magnetococcus marinus (strain ATCC BAA-1437 / JCM 17883 / MC-1).